We begin with the raw amino-acid sequence, 1368 residues long: DNA-directed RNA polymerase subunit beta (1368 aa).

The protein belongs to the RNA polymerase beta chain family. The RNAP catalytic core consists of 2 alpha, 1 beta, 1 beta' and 1 omega subunit. When a sigma factor is associated with the core the holoenzyme is formed, which can initiate transcription.

It catalyses the reaction RNA(n) + a ribonucleoside 5'-triphosphate = RNA(n+1) + diphosphate. DNA-dependent RNA polymerase catalyzes the transcription of DNA into RNA using the four ribonucleoside triphosphates as substrates. This chain is DNA-directed RNA polymerase subunit beta, found in Legionella pneumophila subsp. pneumophila (strain Philadelphia 1 / ATCC 33152 / DSM 7513).